The primary structure comprises 199 residues: Large ribosomal subunit protein bL9 (199 aa).

Positions 153–199 are disordered; sequence KPVKASEKKGRRPRRDEEASDEQILAEENSVTEEAVSEEIQNSESEN.

Belongs to the bacterial ribosomal protein bL9 family.

Functionally, binds to the 23S rRNA. This Treponema denticola (strain ATCC 35405 / DSM 14222 / CIP 103919 / JCM 8153 / KCTC 15104) protein is Large ribosomal subunit protein bL9.